The chain runs to 375 residues: Nucleosome assembly protein 1-like 4 (375 aa).

The segment at 1 to 28 (MAENSLSDGGPADSVEAAKNASNTEKLT) is disordered. At Ala2 the chain carries N-acetylalanine. A phosphoserine mark is found at Ser5, Ser7, and Ser49. At Thr51 the chain carries Phosphothreonine. Ser53 and Ser54 each carry phosphoserine. Thr58 carries the post-translational modification Phosphothreonine. Lys105 is modified (N6-acetyllysine). Residue Ser125 is modified to Phosphoserine. At Lys146 the chain carries N6-acetyllysine. The short motif at 265–271 (IKKKQKH) is the Nuclear localization signal element. Ser304 carries the phosphoserine modification. The disordered stretch occupies residues 339 to 375 (AIEDDDNFEEGEEGEEEELEGDEEGEDEDDADVNPKV).

This sequence belongs to the nucleosome assembly protein (NAP) family. In terms of assembly, interacts with core (H2A, H2B, H3, H4) and linker (H1) histones. Polyglutamylated and polyglycylated. These 2 modifications occur exclusively on glutamate residues and result in either polyglutamate or polyglycine chains on the gamma-carboxyl group. Both modifications can coexist on the same protein on adjacent residues, and lowering polyglycylation levels increases polyglutamylation, and reciprocally. Polyglutamylated by TTLL4. Post-translationally, phosphorylated at the G0/G1 boundary but it is not phosphorylated in S-phase. Phosphorylated protein remains in the cytoplasm in a complex with histones during the G0/G1 transition, whereas dephosphorylation triggers its transport into the nucleus at the G1/S-boundary.

The protein resides in the nucleus. Its subcellular location is the cytoplasm. In terms of biological role, acts as a histone chaperone in nucleosome assembly. In condensing spermatids, mediates the loading of the heterodimer composed of histones H2AB1 and H2BC1/TH2B onto the nucleosomes, thereby promoting the replacement of histones to protamine in male germ cells. This chain is Nucleosome assembly protein 1-like 4 (Nap1l4), found in Mus musculus (Mouse).